The chain runs to 168 residues: RNA pyrophosphohydrolase (168 aa).

Positions 8-160 constitute a Nudix hydrolase domain; sequence PYRTCVGIAL…KRPVYERVAK (153 aa). Positions 47 to 68 match the Nudix box motif; sequence GGVDPGEDAWEAAKRELYEETS.

Belongs to the Nudix hydrolase family. RppH subfamily. A divalent metal cation serves as cofactor.

Functionally, accelerates the degradation of transcripts by removing pyrophosphate from the 5'-end of triphosphorylated RNA, leading to a more labile monophosphorylated state that can stimulate subsequent ribonuclease cleavage. This Bradyrhizobium sp. (strain ORS 278) protein is RNA pyrophosphohydrolase.